The primary structure comprises 122 residues: Small ribosomal subunit protein uS13 (122 aa).

The tract at residues 97-122 (PVRGQRTHTNAKTRKGRSRLPIAGKK) is disordered.

Belongs to the universal ribosomal protein uS13 family. Part of the 30S ribosomal subunit. Forms a loose heterodimer with protein S19. Forms two bridges to the 50S subunit in the 70S ribosome.

Located at the top of the head of the 30S subunit, it contacts several helices of the 16S rRNA. In the 70S ribosome it contacts the 23S rRNA (bridge B1a) and protein L5 of the 50S subunit (bridge B1b), connecting the 2 subunits; these bridges are implicated in subunit movement. Contacts the tRNAs in the A and P-sites. This is Small ribosomal subunit protein uS13 from Wolbachia pipientis wMel.